Consider the following 525-residue polypeptide: Protein-serine O-palmitoleoyltransferase porcupine (525 aa).

A run of 9 helical transmembrane segments spans residues 83 to 103 (VMQY…LCLL), 125 to 145 (LIIL…LAAV), 159 to 179 (GAQV…LLIW), 220 to 240 (FAYL…WVSF), 260 to 280 (LLPN…VAPA), 301 to 318 (VRSS…LLVA), 395 to 415 (SLLH…AFLA), 467 to 487 (NLAF…VLLG), and 505 to 525 (QAGY…LFIS). Residue His-398 is part of the active site.

Belongs to the membrane-bound acyltransferase family. Porcupine subfamily. As to quaternary structure, interacts with wg and Wnt5.

It localises to the endoplasmic reticulum membrane. It carries out the reaction [Wnt protein]-L-serine + (9Z)-hexadecenoyl-CoA = [Wnt protein]-O-(9Z)-hexadecenoyl-L-serine + CoA. In terms of biological role, protein-serine O-palmitoleoyltransferase that acts as a key regulator of the Wnt signaling pathway by mediating the attachment of palmitoleate, a 16-carbon monounsaturated fatty acid (C16:1(9Z)), to Wnt proteins. Serine palmitoleoylation of Wnt proteins is required for efficient binding to frizzled receptors. Also facilitates the glycosylation of Wnt family members, including wg and Wnt5. The cotranslational disulfide bond formation of wg competes with the N-glycosylation. Porc stimulates the post-translational N-glycosylation by anchoring wg at the ER membrane, probably through acylation. The sequence is that of Protein-serine O-palmitoleoyltransferase porcupine from Drosophila melanogaster (Fruit fly).